We begin with the raw amino-acid sequence, 238 residues long: Tabinhibitin 5 (238 aa).

The signal sequence occupies residues 1 to 23 (MTSILVSRFLLAALVLQYATIDA). The Cell attachment site motif lies at 32-34 (RGD). The 145-residue stretch at 67 to 211 (LSKINDVRDH…KARALLTCNF (145 aa)) folds into the SCP domain.

The protein belongs to the CRISP family. As to expression, expressed in salivary glands.

It is found in the secreted. Inhibits platelet aggregation induced by all agonists tested (ADP, arachidonic acid, the thromboxane A2 analog U46619, thrombin, and snake venom snaclecs (TMVA that activates platelet through GPIB, and stejnulxin that specifically acts through GPVI (GP6))). May act by competing with fibrinogen for binding to glycoprotein IIb/IIIa (ITGA2B/ITGB3). This Tabanus yao (Horsefly) protein is Tabinhibitin 5.